Here is a 216-residue protein sequence, read N- to C-terminus: Ras-related protein Rab-11A (216 aa).

Gly2 carries the post-translational modification N-acetylglycine. The GTP site is built by Ser20, Gly21, Val22, Gly23, Lys24, Ser25, Asn26, Asn37, Leu38, Ser40, Ser42, and Thr43. Ser25 serves as a coordination point for Mg(2+). The Switch 1 motif lies at 36 to 47 (FNLESKSTIGVE). Thr43 and Asp66 together coordinate Mg(2+). Positions 67-86 (TAGQERYRAITSAYYRGAVG) match the Switch 2 motif. Residues Gly69, Asn124, Lys125, Asp127, Ala155, and Leu156 each contribute to the GTP site. The segment at 183-207 (DRRENDMSPSNNVVPIHVPPTTENK) is disordered. S-geranylgeranyl cysteine attachment occurs at residues Cys212 and Cys213. Cysteine methyl ester is present on Cys213. A propeptide spans 214-216 (QNI) (removed in mature form).

This sequence belongs to the small GTPase superfamily. Rab family. As to quaternary structure, interacts (GTP-bound form) with RAB11FIPs (via their C-termini) including RAB11FIP1, RAB11FIP2, RAB11FIP3, RAB11FIP4 and RAB11FIP5 effectors. Forms a complex with RAB11FIP3 and dynein intermediate chain DYNC1LI1; the interaction between RAB11A1 and RAB11FIP3 is direct; the complex regulates endocytic trafficking. Interacts with EVI5; EVI5 and RAB11FIP3 may be mutually exclusive and compete for binding RAB11A. Interacts with SGSM1, SGSM2, SGSM3 and VIPAS39. Interacts with EXOC6 in a GTP-dependent manner. Interacts with RAB11FIP5. Interacts with STXBP6. Interacts (GDP-bound form) with ZFYVE27. Interacts with BIRC6/bruce. May interact with TBC1D14. Interacts with UNC119; in a cell cycle-dependent manner. GDP-bound and nucleotide-free forms interact with SH3BP5. Interacts (GDP-bound form) with KIF5A in a ZFYVE27-dependent manner. Interacts (GDP-bound form) with RELCH. Found in a complex composed of RELCH, OSBP1 and RAB11A. Interacts with TBC1D12. Interacts with DEF6. Interacts with ATP9A. Forms a heterotetramer with RAB11FIP3; the GTP-bound form is preferred for binding. Forms a complex with Rabin8/RAB3IP and RAB11FIP3, probably a heterohexamer with two of each protein subunit, where Rabin8/RAB3IP and RAB11FIP3 simultaneously bind to RAB11A; the complex promotes preciliary trafficking and cilia growth. Forms a complex containing RAB11A, ASAP1, Rabin8/RAB3IP, RAP11FIP3 and ARF4; the complex promotes preciliary trafficking; the complex binds to RHO in photoreceptor cells and promotes RHO ciliary transport. Interacts (GTP-bound form) with WDR44; the interaction prevents RAB11A-RAB3IP-RAB11FIP3 complex formation. It depends on Mg(2+) as a cofactor.

It localises to the cell membrane. The protein localises to the endosome membrane. The protein resides in the recycling endosome membrane. Its subcellular location is the cleavage furrow. It is found in the cytoplasmic vesicle. It localises to the phagosome. The protein localises to the cytoplasmic vesicle membrane. The protein resides in the golgi apparatus. Its subcellular location is the trans-Golgi network. The enzyme catalyses GTP + H2O = GDP + phosphate + H(+). Regulated by guanine nucleotide exchange factors (GEFs) which promote the exchange of bound GDP for free GTP. Regulated by GTPase activating proteins (GAPs) which increase the GTP hydrolysis activity. Inhibited by GDP dissociation inhibitors (GDIs) which prevent Rab-GDP dissociation. Functionally, the small GTPases Rab are key regulators of intracellular membrane trafficking, from the formation of transport vesicles to their fusion with membranes. Rabs cycle between an inactive GDP-bound form and an active GTP-bound form that is able to recruit to membranes different set of downstream effectors directly responsible for vesicle formation, movement, tethering and fusion. The small Rab GTPase RAB11A regulates endocytic recycling. Forms a functional Rab11/RAB11FIP3/dynein complex that regulates the movement of peripheral sorting endosomes (SE) along microtubule tracks toward the microtubule organizing center/centrosome, generating the endosomal recycling compartment (ERC). Acts as a major regulator of membrane delivery during cytokinesis. Together with MYO5B and RAB8A participates in epithelial cell polarization. Together with Rabin8/RAB3IP, RAB8A, the exocyst complex, PARD3, PRKCI, ANXA2, CDC42 and DNMBP promotes transcytosis of PODXL to the apical membrane initiation sites (AMIS), apical surface formation and lumenogenesis. Together with MYO5B participates in CFTR trafficking to the plasma membrane and TF (Transferrin) recycling in nonpolarized cells. Required in a complex with MYO5B and RAB11FIP2 for the transport of NPC1L1 to the plasma membrane. Participates in the sorting and basolateral transport of CDH1 from the Golgi apparatus to the plasma membrane. Regulates the recycling of FCGRT (receptor of Fc region of monomeric IgG) to basolateral membranes. May also play a role in melanosome transport and release from melanocytes. Promotes Rabin8/RAB3IP preciliary vesicular trafficking to mother centriole by forming a ciliary targeting complex containing Rab11, ASAP1, Rabin8/RAB3IP, RAB11FIP3 and ARF4, thereby regulating ciliogenesis initiation. On the contrary, upon LPAR1 receptor signaling pathway activation, interaction with phosphorylated WDR44 prevents Rab11-RAB3IP-RAB11FIP3 complex formation and cilia growth. Participates in the export of a subset of neosynthesized proteins through a Rab8-Rab10-Rab11-endososomal dependent export route via interaction with WDR44. The protein is Ras-related protein Rab-11A of Bos taurus (Bovine).